The chain runs to 663 residues: DNA topoisomerase 4 subunit B (663 aa).

ATP-binding positions include tyrosine 7, asparagine 47, aspartate 74, 114-120, and lysine 341; that span reads GLHGVGA. Positions 386–416 are disordered; sequence REAARKAREDARSGKKNKRKDTLLSGKLTPA. Over residues 387–398 the composition is skewed to basic and acidic residues; it reads EAARKAREDARS. Residues 424-538 enclose the Toprim domain; that stretch reads NELYLVEGDS…AGRVFIALPP (115 aa). 3 residues coordinate Mg(2+): glutamate 430, aspartate 503, and aspartate 505.

Belongs to the type II topoisomerase family. ParE type 2 subfamily. In terms of assembly, heterotetramer composed of ParC and ParE. Mg(2+) serves as cofactor. The cofactor is Mn(2+). Requires Ca(2+) as cofactor.

The catalysed reaction is ATP-dependent breakage, passage and rejoining of double-stranded DNA.. In terms of biological role, topoisomerase IV is essential for chromosome segregation. It relaxes supercoiled DNA. Performs the decatenation events required during the replication of a circular DNA molecule. This chain is DNA topoisomerase 4 subunit B, found in Staphylococcus aureus (strain NCTC 8325 / PS 47).